Reading from the N-terminus, the 474-residue chain is tRNA-2-methylthio-N(6)-dimethylallyladenosine synthase (474 aa).

The MTTase N-terminal domain occupies 3–120 (KKLLIKTWGC…LPEMIRQSQS (118 aa)). [4Fe-4S] cluster contacts are provided by Cys-12, Cys-49, Cys-83, Cys-157, Cys-161, and Cys-164. The Radical SAM core domain maps to 143–375 (KAEGATAFVS…QQQVNSQAMR (233 aa)). The 64-residue stretch at 378–441 (RLMLDTEQRV…ANSLRGELVR (64 aa)) folds into the TRAM domain.

It belongs to the methylthiotransferase family. MiaB subfamily. In terms of assembly, monomer. [4Fe-4S] cluster serves as cofactor.

The protein localises to the cytoplasm. It catalyses the reaction N(6)-dimethylallyladenosine(37) in tRNA + (sulfur carrier)-SH + AH2 + 2 S-adenosyl-L-methionine = 2-methylsulfanyl-N(6)-dimethylallyladenosine(37) in tRNA + (sulfur carrier)-H + 5'-deoxyadenosine + L-methionine + A + S-adenosyl-L-homocysteine + 2 H(+). In terms of biological role, catalyzes the methylthiolation of N6-(dimethylallyl)adenosine (i(6)A), leading to the formation of 2-methylthio-N6-(dimethylallyl)adenosine (ms(2)i(6)A) at position 37 in tRNAs that read codons beginning with uridine. The chain is tRNA-2-methylthio-N(6)-dimethylallyladenosine synthase from Aliivibrio fischeri (strain ATCC 700601 / ES114) (Vibrio fischeri).